A 146-amino-acid polypeptide reads, in one-letter code: Protein SprT-like (146 aa).

One can recognise a SprT-like domain in the interval 6 to 141 (YVKTVSIEDF…GCGLCQGKLI (136 aa)). A Zn(2+)-binding site is contributed by H64. Residue E65 is part of the active site. H68 lines the Zn(2+) pocket.

The protein belongs to the SprT family. Requires Zn(2+) as cofactor.

It localises to the cytoplasm. This chain is Protein SprT-like, found in Streptococcus thermophilus (strain CNRZ 1066).